We begin with the raw amino-acid sequence, 146 residues long: UPF0260 protein Swoo_2117 (146 aa).

It belongs to the UPF0260 family.

This Shewanella woodyi (strain ATCC 51908 / MS32) protein is UPF0260 protein Swoo_2117.